The following is a 73-amino-acid chain: DNA-directed RNA polymerase subunit epsilon (73 aa).

Belongs to the RNA polymerase subunit epsilon family. RNAP is composed of a core of 2 alpha, a beta and a beta' subunit. The core is associated with a delta subunit, and at least one of epsilon or omega. When a sigma factor is associated with the core the holoenzyme is formed, which can initiate transcription.

The enzyme catalyses RNA(n) + a ribonucleoside 5'-triphosphate = RNA(n+1) + diphosphate. Functionally, a non-essential component of RNA polymerase (RNAP). The polypeptide is DNA-directed RNA polymerase subunit epsilon (Lactobacillus acidophilus (strain ATCC 700396 / NCK56 / N2 / NCFM)).